Consider the following 95-residue polypeptide: Aspartyl/glutamyl-tRNA(Asn/Gln) amidotransferase subunit C (95 aa).

It belongs to the GatC family. As to quaternary structure, heterotrimer of A, B and C subunits.

It carries out the reaction L-glutamyl-tRNA(Gln) + L-glutamine + ATP + H2O = L-glutaminyl-tRNA(Gln) + L-glutamate + ADP + phosphate + H(+). The catalysed reaction is L-aspartyl-tRNA(Asn) + L-glutamine + ATP + H2O = L-asparaginyl-tRNA(Asn) + L-glutamate + ADP + phosphate + 2 H(+). Functionally, allows the formation of correctly charged Asn-tRNA(Asn) or Gln-tRNA(Gln) through the transamidation of misacylated Asp-tRNA(Asn) or Glu-tRNA(Gln) in organisms which lack either or both of asparaginyl-tRNA or glutaminyl-tRNA synthetases. The reaction takes place in the presence of glutamine and ATP through an activated phospho-Asp-tRNA(Asn) or phospho-Glu-tRNA(Gln). The sequence is that of Aspartyl/glutamyl-tRNA(Asn/Gln) amidotransferase subunit C from Paracoccus denitrificans (strain Pd 1222).